We begin with the raw amino-acid sequence, 301 residues long: Beta-1,3-galactosyltransferase 5 (301 aa).

Residues Met-1 to Arg-7 are Cytoplasmic-facing. The chain crosses the membrane as a helical; Signal-anchor for type II membrane protein span at residues Leu-8–Leu-28. The Lumenal portion of the chain corresponds to Asn-29–Asn-301. Asn-130, Asn-174, and Asn-231 each carry an N-linked (GlcNAc...) asparagine glycan.

This sequence belongs to the glycosyltransferase 31 family.

Its subcellular location is the golgi apparatus membrane. It catalyses the reaction a globoside Gb4Cer (d18:1(4E)) + UDP-alpha-D-galactose = a globoside GalGb4Cer (d18:1(4E)) + UDP + H(+). The protein operates within protein modification; protein glycosylation. In terms of biological role, catalyzes the transfer of Gal to GlcNAc-based acceptors with a preference for the core3 O-linked glycan GlcNAc(beta1,3)GalNAc structure. Can use glycolipid LC3Cer as an efficient acceptor. This Pan paniscus (Pygmy chimpanzee) protein is Beta-1,3-galactosyltransferase 5 (B3GALT5).